The chain runs to 87 residues: Small ribosomal subunit protein uS17 (87 aa).

It belongs to the universal ribosomal protein uS17 family. In terms of assembly, part of the 30S ribosomal subunit.

One of the primary rRNA binding proteins, it binds specifically to the 5'-end of 16S ribosomal RNA. The chain is Small ribosomal subunit protein uS17 from Alcanivorax borkumensis (strain ATCC 700651 / DSM 11573 / NCIMB 13689 / SK2).